The primary structure comprises 226 residues: Leucyl/phenylalanyl-tRNA--protein transferase (226 aa).

Belongs to the L/F-transferase family.

Its subcellular location is the cytoplasm. The catalysed reaction is N-terminal L-lysyl-[protein] + L-leucyl-tRNA(Leu) = N-terminal L-leucyl-L-lysyl-[protein] + tRNA(Leu) + H(+). The enzyme catalyses N-terminal L-arginyl-[protein] + L-leucyl-tRNA(Leu) = N-terminal L-leucyl-L-arginyl-[protein] + tRNA(Leu) + H(+). It catalyses the reaction L-phenylalanyl-tRNA(Phe) + an N-terminal L-alpha-aminoacyl-[protein] = an N-terminal L-phenylalanyl-L-alpha-aminoacyl-[protein] + tRNA(Phe). Its function is as follows. Functions in the N-end rule pathway of protein degradation where it conjugates Leu, Phe and, less efficiently, Met from aminoacyl-tRNAs to the N-termini of proteins containing an N-terminal arginine or lysine. The polypeptide is Leucyl/phenylalanyl-tRNA--protein transferase (Pseudomonas aeruginosa (strain UCBPP-PA14)).